The following is a 251-amino-acid chain: Pyrroloquinoline-quinone synthase (251 aa).

The protein belongs to the PqqC family.

The catalysed reaction is 6-(2-amino-2-carboxyethyl)-7,8-dioxo-1,2,3,4,7,8-hexahydroquinoline-2,4-dicarboxylate + 3 O2 = pyrroloquinoline quinone + 2 H2O2 + 2 H2O + H(+). Its pathway is cofactor biosynthesis; pyrroloquinoline quinone biosynthesis. Ring cyclization and eight-electron oxidation of 3a-(2-amino-2-carboxyethyl)-4,5-dioxo-4,5,6,7,8,9-hexahydroquinoline-7,9-dicarboxylic-acid to PQQ. The chain is Pyrroloquinoline-quinone synthase from Cronobacter sakazakii (strain ATCC BAA-894) (Enterobacter sakazakii).